Reading from the N-terminus, the 256-residue chain is Post-translational flagellin modification protein A (256 aa).

Serine 145 serves as a coordination point for substrate. Catalysis depends on tyrosine 168, which acts as the Proton acceptor.

It belongs to the short-chain dehydrogenases/reductases (SDR) family.

Required for biosynthesis of LAH modification in the post-translational modification of Campylobacter coli flagellin. The chain is Post-translational flagellin modification protein A (ptmA) from Campylobacter coli.